Consider the following 464-residue polypeptide: Sugar transporter ERD6-like 1 (464 aa).

Helical transmembrane passes span 23–43, 72–92, 95–115, 125–145, 156–176, 180–200, 263–283, 298–318, 326–346, 359–379, 399–419, and 424–444; these read ITCG…VYGC, VMTL…AVIG, QTMW…AFAH, GFLG…IAEI, FSNQ…GNFF, TLAL…FFIP, LIIG…AISA, IGTS…MFAV, LLMS…LSYY, PILI…LGGL, LVTV…NFMM, and FGTY…VWTL.

Belongs to the major facilitator superfamily. Sugar transporter (TC 2.A.1.1) family.

The protein resides in the membrane. In terms of biological role, sugar transporter. The chain is Sugar transporter ERD6-like 1 (SUGTL4) from Arabidopsis thaliana (Mouse-ear cress).